A 404-amino-acid chain; its full sequence is Probable tRNA sulfurtransferase (404 aa).

The 106-residue stretch at glutamate 61–glutamate 166 folds into the THUMP domain. Residues leucine 184 to leucine 185, histidine 209 to phenylalanine 210, arginine 266, glycine 288, and glutamine 297 each bind ATP.

It belongs to the ThiI family.

The protein resides in the cytoplasm. It catalyses the reaction [ThiI sulfur-carrier protein]-S-sulfanyl-L-cysteine + a uridine in tRNA + 2 reduced [2Fe-2S]-[ferredoxin] + ATP + H(+) = [ThiI sulfur-carrier protein]-L-cysteine + a 4-thiouridine in tRNA + 2 oxidized [2Fe-2S]-[ferredoxin] + AMP + diphosphate. The catalysed reaction is [ThiS sulfur-carrier protein]-C-terminal Gly-Gly-AMP + S-sulfanyl-L-cysteinyl-[cysteine desulfurase] + AH2 = [ThiS sulfur-carrier protein]-C-terminal-Gly-aminoethanethioate + L-cysteinyl-[cysteine desulfurase] + A + AMP + 2 H(+). It functions in the pathway cofactor biosynthesis; thiamine diphosphate biosynthesis. Functionally, catalyzes the ATP-dependent transfer of a sulfur to tRNA to produce 4-thiouridine in position 8 of tRNAs, which functions as a near-UV photosensor. Also catalyzes the transfer of sulfur to the sulfur carrier protein ThiS, forming ThiS-thiocarboxylate. This is a step in the synthesis of thiazole, in the thiamine biosynthesis pathway. The sulfur is donated as persulfide by IscS. This Bacillus cereus (strain B4264) protein is Probable tRNA sulfurtransferase.